Here is a 595-residue protein sequence, read N- to C-terminus: Probable carotenoid cleavage dioxygenase 4, chloroplastic (595 aa).

A chloroplast-targeting transit peptide spans 1 to 34; the sequence is MDSVSSSSFLSSTFSLHHSLLRRRSSSPTLLRIN. Positions 41 to 74 are disordered; that stretch reads RSPITNPSDNNDRRNKPKTLHNRTNHTLVSSPPK. Residues 55–64 show a composition bias toward basic residues; the sequence is NKPKTLHNRT. The Fe cation site is built by His287, His336, His404, and His583.

It belongs to the carotenoid oxygenase family. In terms of assembly, interacts with VAR3. Interacts with PGM48. Fe(2+) serves as cofactor. In terms of tissue distribution, mostly expressed in flowers (e.g. sepals and petals), siliques, seeds, leaves and cotyledons.

The protein localises to the plastid. It is found in the chloroplast. It localises to the plastoglobule. In terms of biological role, may be involved in carotenoid cleavage. This chain is Probable carotenoid cleavage dioxygenase 4, chloroplastic (CCD4), found in Arabidopsis thaliana (Mouse-ear cress).